A 69-amino-acid chain; its full sequence is uncharacterized protein (69 aa).

The signal sequence occupies residues Met-1 to Ala-16.

This is an uncharacterized protein from Archaeoglobus fulgidus (strain ATCC 49558 / DSM 4304 / JCM 9628 / NBRC 100126 / VC-16).